Consider the following 221-residue polypeptide: Chalcone--flavanone isomerase (221 aa).

3 residues coordinate substrate: Thr-50, Asn-115, and Thr-192.

Belongs to the chalcone isomerase family.

It catalyses the reaction a chalcone = a flavanone.. The protein operates within secondary metabolite biosynthesis; flavonoid biosynthesis. In terms of biological role, catalyzes the intramolecular cyclization of bicyclic chalcones into tricyclic (S)-flavanones. Responsible for the isomerization of 4,2',4',6'-tetrahydroxychalcone (also termed chalcone) into naringenin. This is Chalcone--flavanone isomerase (CHI) from Phaseolus vulgaris (Kidney bean).